Consider the following 404-residue polypeptide: Spore germination protein YndF (404 aa).

An N-terminal signal peptide occupies residues 1 to 24 (MKSKLKRQLPAMVIVCLLMICVTG). Residue Cys25 is the site of N-palmitoyl cysteine attachment. Cys25 carries the S-diacylglycerol cysteine lipid modification.

Belongs to the GerABKC lipoprotein family.

Its subcellular location is the cell membrane. May be involved in spore germination. This is Spore germination protein YndF (yndF) from Bacillus subtilis (strain 168).